Consider the following 369-residue polypeptide: Protein V (369 aa).

Disordered regions lie at residues 1–23 (MDQD…GGRE) and 54–320 (INTL…GHRR). 4 stretches are compositionally biased toward basic and acidic residues: residues 7 to 20 (ISKE…EASG), 99 to 110 (AEAHARNVDKQN), 150 to 168 (GAED…RGED), and 175 to 193 (EEIR…RADN). Ser249, Ser257, and Ser260 each carry phosphoserine; by host. His318, Cys337, Cys341, Cys353, Cys355, Cys358, Cys362, and Cys365 together coordinate Zn(2+).

This sequence belongs to the paramyxoviruses V protein family. As to quaternary structure, interacts with host IFIH1/MDA5 and DHX58/LGP2. Interacts with host IRF3. Interacts with host RIGI regulatory protein (via CARDs domain) and host TRIM25 (via SPRY domain); these interactions prevent TRIM25-mediated ubiquitination of RIG-I and disrupts downstream RIG-I signaling.

Its subcellular location is the host cytoplasm. In terms of biological role, plays an essential role in the inhibition of host immune response. Prevents the establishment of cellular antiviral state by blocking interferon-alpha/beta (IFN-alpha/beta) production and signaling pathway. Interacts with host IFIH1/MDA5 and DHX58/LGP2 to inhibit the transduction pathway involved in the activation of IFN-beta promoter, thus protecting the virus against cell antiviral state. Also interacts with and inhibits host IRF3. Blocks the type I interferon signaling pathway by disrupting the RIG-I signaling pathway. This is Protein V (P/V/C) from Cavia cutleri (Guinea pig).